We begin with the raw amino-acid sequence, 296 residues long: Ribosomal protein L11 methyltransferase (296 aa).

The S-adenosyl-L-methionine site is built by Thr151, Gly172, Asp194, and Asn233.

Belongs to the methyltransferase superfamily. PrmA family.

It is found in the cytoplasm. It catalyses the reaction L-lysyl-[protein] + 3 S-adenosyl-L-methionine = N(6),N(6),N(6)-trimethyl-L-lysyl-[protein] + 3 S-adenosyl-L-homocysteine + 3 H(+). Functionally, methylates ribosomal protein L11. The chain is Ribosomal protein L11 methyltransferase from Thiobacillus denitrificans (strain ATCC 25259 / T1).